We begin with the raw amino-acid sequence, 320 residues long: Heptaprenyl diphosphate synthase component 2 (320 aa).

Isopentenyl diphosphate is bound by residues Lys45, Arg48, and His77. Residues Asp84 and Asp88 each contribute to the Mg(2+) site. All-trans-hexaprenyl diphosphate is bound at residue Arg93. An isopentenyl diphosphate-binding site is contributed by Arg94. Positions 170, 171, and 208 each coordinate all-trans-hexaprenyl diphosphate.

This sequence belongs to the FPP/GGPP synthase family. In terms of assembly, heterodimer of component I and II. Requires Mg(2+) as cofactor.

The enzyme catalyses 4 isopentenyl diphosphate + (2E,6E)-farnesyl diphosphate = all-trans-heptaprenyl diphosphate + 4 diphosphate. Its function is as follows. Supplies heptaprenyl diphosphate, the precursor for the side chain of the isoprenoid quinone menaquinone-7 (MQ-7). The protein is Heptaprenyl diphosphate synthase component 2 (hepT) of Geobacillus stearothermophilus (Bacillus stearothermophilus).